A 168-amino-acid polypeptide reads, in one-letter code: DOMON domain-containing protein Y73F4A.2 (168 aa).

An N-terminal signal peptide occupies residues 1-18 (MFRSIAVLSALLFAFASA). Residues 26-143 (SDFEVYWRFA…CQKWRFVKSG (118 aa)) form the DOMON domain. Asparagine 36 is a glycosylation site (N-linked (GlcNAc...) asparagine). The segment at 148 to 168 (GQLTRNDKSPKEKKVCPMECN) is disordered. Positions 152–168 (RNDKSPKEKKVCPMECN) are enriched in basic and acidic residues.

It localises to the secreted. The sequence is that of DOMON domain-containing protein Y73F4A.2 from Caenorhabditis elegans.